A 1007-amino-acid polypeptide reads, in one-letter code: Calmodulin-binding transcription activator 1 (1007 aa).

Residues Met-18–Ser-144 constitute a DNA-binding region (CG-1). Residues Lys-148–Asp-164 are compositionally biased toward polar residues. Residues Lys-148 to Asp-227 form a disordered region. Low complexity predominate over residues Ser-165–Leu-176. Positions Gly-183 to Asn-202 are enriched in polar residues. The transcription activation stretch occupies residues Asp-233–Gly-398. ANK repeat units follow at residues Asp-612–Phe-641 and Asn-645–Ala-674. 2 consecutive IQ domains span residues Leu-821–Lys-850 and Ile-844–Leu-873. The calmodulin-binding stretch occupies residues Trp-869–Phe-891. Residues Gln-915 to Met-943 are a coiled coil. Position 942 is a phosphoserine (Ser-942).

It belongs to the CAMTA family. Expressed in roots, stems, leaves, pollen and siliques.

The protein localises to the nucleus. In terms of biological role, transcription activator that binds calmodulin in a calcium-dependent manner in vitro. Binds to the DNA consensus sequence 5'-[ACG]CGCG[GTC]-3'. Regulates transcriptional activity in response to calcium signals. Involved in freezing tolerance. Involved in freezing tolerance in association with CAMTA2 and CAMTA3. Contributes together with CAMTA2 and CAMTA3 to the positive regulation of the cold-induced expression of DREB1A/CBF3, DREB1B/CBF1 and DREB1C/CBF2. Involved in drought stress responses by regulating several drought-responsive genes. Involved in auxin signaling and responses to abiotic stresses. Activates the expression of the V-PPase proton pump AVP1 in pollen. The protein is Calmodulin-binding transcription activator 1 of Arabidopsis thaliana (Mouse-ear cress).